A 310-amino-acid chain; its full sequence is Homoserine kinase (310 aa).

95-105 contributes to the ATP binding site; it reads PQSRGLGSSAA.

Belongs to the GHMP kinase family. Homoserine kinase subfamily.

Its subcellular location is the cytoplasm. It carries out the reaction L-homoserine + ATP = O-phospho-L-homoserine + ADP + H(+). It functions in the pathway amino-acid biosynthesis; L-threonine biosynthesis; L-threonine from L-aspartate: step 4/5. Catalyzes the ATP-dependent phosphorylation of L-homoserine to L-homoserine phosphate. The protein is Homoserine kinase of Corynebacterium kroppenstedtii (strain DSM 44385 / JCM 11950 / CIP 105744 / CCUG 35717).